The sequence spans 298 residues: tRNA pseudouridine synthase B (298 aa).

The Nucleophile role is filled by Asp-39.

The protein belongs to the pseudouridine synthase TruB family. Type 1 subfamily.

It carries out the reaction uridine(55) in tRNA = pseudouridine(55) in tRNA. Responsible for synthesis of pseudouridine from uracil-55 in the psi GC loop of transfer RNAs. This chain is tRNA pseudouridine synthase B, found in Lactobacillus delbrueckii subsp. bulgaricus (strain ATCC BAA-365 / Lb-18).